Here is a 415-residue protein sequence, read N- to C-terminus: 3-isopropylmalate dehydratase large subunit (415 aa).

Residues Cys-295, Cys-353, and Cys-356 each coordinate [4Fe-4S] cluster.

The protein belongs to the aconitase/IPM isomerase family. LeuC type 2 subfamily. In terms of assembly, heterodimer of LeuC and LeuD. [4Fe-4S] cluster is required as a cofactor.

It catalyses the reaction (2R,3S)-3-isopropylmalate = (2S)-2-isopropylmalate. It participates in amino-acid biosynthesis; L-leucine biosynthesis; L-leucine from 3-methyl-2-oxobutanoate: step 2/4. Functionally, catalyzes the isomerization between 2-isopropylmalate and 3-isopropylmalate, via the formation of 2-isopropylmaleate. The polypeptide is 3-isopropylmalate dehydratase large subunit (Pyrobaculum arsenaticum (strain DSM 13514 / JCM 11321 / PZ6)).